We begin with the raw amino-acid sequence, 496 residues long: NADP-dependent glyceraldehyde-3-phosphate dehydrogenase (496 aa).

Residue alanine 2 is modified to N-acetylalanine. A Phosphothreonine modification is found at threonine 4. Substrate contacts are provided by residues arginine 116 and 169–170 (NY). The NADP(+) site is built by lysine 192, threonine 195, and aspartate 230. Residue 245–249 (GGDTG) participates in NAD(+) binding. Catalysis depends on glutamate 264, which acts as the Proton acceptor. Residue 297–299 (RCT) participates in substrate binding. Cysteine 298 acts as the Nucleophile in catalysis. Residue glutamate 391 coordinates NADP(+). Arginine 451 is a substrate binding site.

The protein belongs to the aldehyde dehydrogenase family.

The protein resides in the cytoplasm. The enzyme catalyses D-glyceraldehyde 3-phosphate + NADP(+) + H2O = (2R)-3-phosphoglycerate + NADPH + 2 H(+). In terms of biological role, important as a means of generating NADPH for biosynthetic reactions. The polypeptide is NADP-dependent glyceraldehyde-3-phosphate dehydrogenase (ALDH11A3) (Arabidopsis thaliana (Mouse-ear cress)).